A 200-amino-acid chain; its full sequence is Recombination protein RecR (200 aa).

A C4-type zinc finger spans residues 57 to 72; that stretch reads CSECRTFTEEDTCAIC. One can recognise a Toprim domain in the interval 81–176; the sequence is GEMCIVESPA…PASRIAHGVP (96 aa).

The protein belongs to the RecR family.

In terms of biological role, may play a role in DNA repair. It seems to be involved in an RecBC-independent recombinational process of DNA repair. It may act with RecF and RecO. The chain is Recombination protein RecR from Aliivibrio fischeri (strain ATCC 700601 / ES114) (Vibrio fischeri).